We begin with the raw amino-acid sequence, 191 residues long: dCTP deaminase, dUMP-forming (191 aa).

Residues 101–106, Asp119, 127–129, Gln148, Tyr162, and Gln174 contribute to the dCTP site; these read KSSLGR and TLE. Glu129 (proton donor/acceptor) is an active-site residue.

The protein belongs to the dCTP deaminase family. In terms of assembly, homotrimer.

It carries out the reaction dCTP + 2 H2O = dUMP + NH4(+) + diphosphate. The protein operates within pyrimidine metabolism; dUMP biosynthesis; dUMP from dCTP: step 1/1. Its function is as follows. Bifunctional enzyme that catalyzes both the deamination of dCTP to dUTP and the hydrolysis of dUTP to dUMP without releasing the toxic dUTP intermediate. This is dCTP deaminase, dUMP-forming from Streptomyces coelicolor (strain ATCC BAA-471 / A3(2) / M145).